A 431-amino-acid polypeptide reads, in one-letter code: Enolase (431 aa).

Q166 serves as a coordination point for (2R)-2-phosphoglycerate. The active-site Proton donor is the E208. Residues D245, E288, and D315 each contribute to the Mg(2+) site. (2R)-2-phosphoglycerate contacts are provided by K340, R369, S370, and K391. K340 (proton acceptor) is an active-site residue.

It belongs to the enolase family. Requires Mg(2+) as cofactor.

It localises to the cytoplasm. The protein resides in the secreted. Its subcellular location is the cell surface. It carries out the reaction (2R)-2-phosphoglycerate = phosphoenolpyruvate + H2O. It participates in carbohydrate degradation; glycolysis; pyruvate from D-glyceraldehyde 3-phosphate: step 4/5. Functionally, catalyzes the reversible conversion of 2-phosphoglycerate (2-PG) into phosphoenolpyruvate (PEP). It is essential for the degradation of carbohydrates via glycolysis. This is Enolase from Clostridium botulinum (strain ATCC 19397 / Type A).